We begin with the raw amino-acid sequence, 557 residues long: MISDNARSGMQQAPARSLFNALGFTAEEMKKPMIGIVSSYNEIVPGHMNIDKIVNAVKLGVAEAGGVPVVFPAIAVCDGIAMGHVGMKYSLVTRDLIADSTECMAIAHQFDGLVMVPNCDKNVPGLLMAAARLNLPTVFVSGGPMLAGHVKGKKRSLSSMFEAVGSYAAGTMTEEDVLEFEEKVCPTCGSCSGMYTANSMNCLTEALGMGLRGNGTIPAVYSERIKLAKHAGMAVMDMVNKGITARDIITKDSIMNALTVDMALGCSTNSMLHLPAIAHEIGFDFDIKFANPISEKTPNLCHLAPAGPTYMEDLNEAGGVYAVMKELADIGLLNTDCLTVSGKTIGECIATAYNRDPEVIRTVDNAYSKTGGLAVLSGNLAPDGSVVKRSAVVPEMLVHEGPARVFDSEEDAIAAIKGGKIVEGDVVVIRYEGPKGGPGMREMLNPTSAIAGMGLGSSVALITDGRFSGASRGASIGHVSPEAAVGGPIALVEEGDIISIDIPGLKLELKVSDEELAARKAKWQPREPKVTTGYLKRYASLVTSGNRGAILKSSADE.

Asp78 contacts Mg(2+). Cys119 serves as a coordination point for [2Fe-2S] cluster. Residues Asp120 and Lys121 each coordinate Mg(2+). Lys121 carries the N6-carboxylysine modification. [2Fe-2S] cluster is bound at residue Cys191. Position 442 (Glu442) interacts with Mg(2+). The Proton acceptor role is filled by Ser468.

This sequence belongs to the IlvD/Edd family. Homodimer. Requires [2Fe-2S] cluster as cofactor. It depends on Mg(2+) as a cofactor.

It carries out the reaction (2R)-2,3-dihydroxy-3-methylbutanoate = 3-methyl-2-oxobutanoate + H2O. The catalysed reaction is (2R,3R)-2,3-dihydroxy-3-methylpentanoate = (S)-3-methyl-2-oxopentanoate + H2O. It participates in amino-acid biosynthesis; L-isoleucine biosynthesis; L-isoleucine from 2-oxobutanoate: step 3/4. It functions in the pathway amino-acid biosynthesis; L-valine biosynthesis; L-valine from pyruvate: step 3/4. Its function is as follows. Functions in the biosynthesis of branched-chain amino acids. Catalyzes the dehydration of (2R,3R)-2,3-dihydroxy-3-methylpentanoate (2,3-dihydroxy-3-methylvalerate) into 2-oxo-3-methylpentanoate (2-oxo-3-methylvalerate) and of (2R)-2,3-dihydroxy-3-methylbutanoate (2,3-dihydroxyisovalerate) into 2-oxo-3-methylbutanoate (2-oxoisovalerate), the penultimate precursor to L-isoleucine and L-valine, respectively. The sequence is that of Dihydroxy-acid dehydratase from Lachnospira eligens (strain ATCC 27750 / DSM 3376 / VPI C15-48 / C15-B4) (Eubacterium eligens).